The following is a 685-amino-acid chain: MPDLLIELFSEEIPARMQARARGDLKKLVTDGLVEAGLTYKSAGAFSTPRRLALAIEGLTAQSPTTREERKGPRTDAPEAALEGFLRSTGLTREQLEARDDKKGQVWFAVVTKPGRPAAEIVAEVLERAIRDFPWPKSMRWGSGSLRWVRPLHSIICLLSDESGASVVPLEIEGIGAGNTTRGHRFMAPDEIAVSGFEDYAAKLRRARVMLDAAEREAAIRQEAANLAFARGWEIVPDEGLLSEVAGLVEWPVPLMGAIEDRFLALPPEVLQTSMKEHQKFFSARNPKTGRIEGFVTVANIETPDHGETILKGNQRVLAARLSDAAFFWENDLREAKAGMADWAEGLRSVTFQSKLGSQADRIARIAALALEIAPLVGADADQAEQAARIAKLDLRSAMVGEFPELQGIMGRYYALEAGLPEPVADAARDHYSPLGPSDAVPSAPVSVAVALADKLDTLTGFWAIDEKPTGSKDPFALRRAALGVIRLLLVNGVRANLGQTFAKARPDADAADLLAFFHDRLKVHLRDQGVRHDIIDAVLSMPGNDDLVLLVNRATALSDVLKTEDGTNLLQGLKRAGNILAQAEEMDGVEYSFGADPKFAETDEERTLFAALDKAEPAIREAVRLEDFQAATQGIASLRAPIDAFFEAVQINSDNQILRRNRLNLLSRIRDAGRLIADFGRIEG.

Residues 58 to 77 (GLTAQSPTTREERKGPRTDA) are disordered. The segment covering 66 to 77 (TREERKGPRTDA) has biased composition (basic and acidic residues).

Belongs to the class-II aminoacyl-tRNA synthetase family. Tetramer of two alpha and two beta subunits.

It localises to the cytoplasm. The catalysed reaction is tRNA(Gly) + glycine + ATP = glycyl-tRNA(Gly) + AMP + diphosphate. The polypeptide is Glycine--tRNA ligase beta subunit (Paracoccus denitrificans (strain Pd 1222)).